The chain runs to 416 residues: MSDENQHGFYRTSFEYASISWRRMIPNVADTIVVTLIGATALQVASNVLITILTLNIAFLNFCSLICMHNLKRGAKADVFAAIVRAACMMIGVYLALIAVSVATLEGAPRTQTIAFIALSALRPFVAGWNAYCAEVFFAQGKRQIVRSVITRSSLIYAGVNLLFVGLSHFAGTQNSIISLLIGVYLALFHNALAYARILPTEWRFSRQDLKDVFSLRKLDLVGIGAGLSASFINMLEMGFLALVGWVVAAKFPQIAVFYFPFFTLVELTSGLAIGLGRSVTERLITPRPFPRLHVLIAVYSTYSLLCFLIYVGLIGVSNRDIFALPLSLAGLALLFLICDGLQLVVRGYTLAKADGGKLTHLSAIAYLASGVILALAAVLGSVQALAIALVLGPLFLAISIPAVQSRTALNALPNR.

Helical transmembrane passes span 24–44 (MIPNVADTIVVTLIGATALQV), 48–68 (VLITILTLNIAFLNFCSLICM), 79–99 (VFAAIVRAACMMIGVYLALIA), 114–134 (IAFIALSALRPFVAGWNAYCA), 153–173 (SSLIYAGVNLLFVGLSHFAGT), 176–196 (SIISLLIGVYLALFHNALAYA), 230–250 (ASFINMLEMGFLALVGWVVAA), 255–275 (IAVFYFPFFTLVELTSGLAIG), 295–315 (VLIAVYSTYSLLCFLIYVGLI), 322–342 (IFALPLSLAGLALLFLICDGL), and 372–392 (VILALAAVLGSVQALAIALVL).

The protein resides in the cell membrane. Functionally, the actions of the proteins TfxB, TfxD and TfxF are implicated in the processing of the inactive trifolitoxin (TfxA) precursor into the active peptide. In Rhizobium leguminosarum bv. trifolii, this protein is Trifolitoxin-processing protein TfxD (tfxD).